Reading from the N-terminus, the 585-residue chain is Arginine--tRNA ligase (585 aa).

The 'HIGH' region signature appears at P127–H137.

This sequence belongs to the class-I aminoacyl-tRNA synthetase family. Monomer.

The protein resides in the cytoplasm. It carries out the reaction tRNA(Arg) + L-arginine + ATP = L-arginyl-tRNA(Arg) + AMP + diphosphate. The protein is Arginine--tRNA ligase of Borreliella afzelii (strain PKo) (Borrelia afzelii).